Reading from the N-terminus, the 100-residue chain is Small ribosomal subunit protein uS14 (100 aa).

It belongs to the universal ribosomal protein uS14 family. As to quaternary structure, part of the 30S ribosomal subunit. Contacts proteins S3 and S10.

Functionally, binds 16S rRNA, required for the assembly of 30S particles and may also be responsible for determining the conformation of the 16S rRNA at the A site. The protein is Small ribosomal subunit protein uS14 of Prochlorococcus marinus (strain MIT 9301).